The primary structure comprises 401 residues: Tumor necrosis factor receptor superfamily member 11B (401 aa).

The N-terminal stretch at 1-21 (MNNLLCCALVFLDISIKWTTQ) is a signal peptide. TNFR-Cys repeat units follow at residues 24–62 (FPPK…KTVC), 65–105 (CPDH…NRVC), 107–142 (CKEG…NTVC), and 145–185 (CPDG…DNIC). Disulfide bonds link cysteine 41–cysteine 54, cysteine 44–cysteine 62, cysteine 65–cysteine 80, cysteine 83–cysteine 97, cysteine 87–cysteine 105, cysteine 107–cysteine 118, cysteine 124–cysteine 142, and cysteine 145–cysteine 160. N-linked (GlcNAc...) asparagine glycosylation is present at asparagine 98. Residues asparagine 152, asparagine 165, and asparagine 178 are each glycosylated (N-linked (GlcNAc...) asparagine). An intrachain disulfide couples cysteine 166 to cysteine 185. 2 consecutive Death domains span residues 198-269 (DVTL…IVKK) and 270-365 (IIQD…TQSL). Asparagine 289 is a glycosylation site (N-linked (GlcNAc...) asparagine).

Homodimer. Interacts with TNFSF10 and TNFSF11. N-glycosylated. Contains sialic acid residues. Post-translationally, the N-terminus is blocked. Highly expressed in adult lung, heart, kidney, liver, spleen, thymus, prostate, ovary, small intestine, thyroid, lymph node, trachea, adrenal gland, testis, and bone marrow. Detected at very low levels in brain, placenta and skeletal muscle. Highly expressed in fetal kidney, liver and lung.

The protein localises to the secreted. Functionally, acts as a decoy receptor for TNFSF11/RANKL and thereby neutralizes its function in osteoclastogenesis. Inhibits the activation of osteoclasts and promotes osteoclast apoptosis in vitro. Bone homeostasis seems to depend on the local ratio between TNFSF11 and TNFRSF11B. May also play a role in preventing arterial calcification. May act as decoy receptor for TNFSF10/TRAIL and protect against apoptosis. TNFSF10/TRAIL binding blocks the inhibition of osteoclastogenesis. This chain is Tumor necrosis factor receptor superfamily member 11B (TNFRSF11B), found in Homo sapiens (Human).